The primary structure comprises 70 residues: UPF0352 protein PSHAa1818 (70 aa).

Belongs to the UPF0352 family.

This Pseudoalteromonas translucida (strain TAC 125) protein is UPF0352 protein PSHAa1818.